The following is a 387-amino-acid chain: MGRVGVLLLNLGGPEKLEDVRPFLFNLFADPEIIRLPFPWLQKPLAWLISTLRAKKSQANYAEIGGGSPLLQITEAQASALTTRLERLGQDAKVYIGMRYWHPFTEEAVEKIKGDRLQRLVILPLYPHFSISTSGSSFRVLEEMWHNDPSLRQLDYSLIPSWYDHPGYLQAMADLIAQELKKFPNPDQAHIFFSAHGVPQSYVDEAGDPYQAEIEACTRLIMRTLDRPNQYTLAYQSRVGPVEWLKPYTEEALQKLGAEGIDDLLVVPISFVSEHIETLQEIDIEYREIAEEAGIDNFQRVPALNTHPVFIDALAQMVMDSLNDPPCTFETVPHPKKNMKMYPQERWEWGLTTAAEVWNGRLAMLGFIALLVELISGQGPLHFVGLL.

The tract at residues 1–318 is ferrochelatase; it reads MGRVGVLLLN…VFIDALAQMV (318 aa). H196 and E277 together coordinate Fe cation. Residues 319-387 form a hlip domain region; sequence MDSLNDPPCT…QGPLHFVGLL (69 aa).

This sequence in the N-terminal section; belongs to the ferrochelatase family. It in the C-terminal section; belongs to the Hlip family.

It localises to the cytoplasm. The enzyme catalyses heme b + 2 H(+) = protoporphyrin IX + Fe(2+). It functions in the pathway porphyrin-containing compound metabolism; protoheme biosynthesis; protoheme from protoporphyrin-IX: step 1/1. Catalyzes the ferrous insertion into protoporphyrin IX. Its function is as follows. The Hlip proteins might regulate tetrapyrrole biosynthesis, maybe at the level of aminolevulinic acid synthesis. Deletion of 4 to 5 members of the Hlip family (always including this member) suggests the proteins are involved in regulation of chlorophyll biosynthesis, in stabilization of chlorophyll-binding proteins and/or in reuse of chlorophylls, and may regulate tetrapyrrole biosynthesis. The Hlip proteins probably stabilize PSII assembly intermediates. The protein is Ferrochelatase of Synechocystis sp. (strain ATCC 27184 / PCC 6803 / Kazusa).